The following is a 904-amino-acid chain: MNMIQNILRVILGSKFERDLKKLVPIVGQINSLEKEMKETSDSLLSSQTQKFRERIARGESLDSILPEAFATVREVSLRTMGMRHFDVQMMGGIALHRGNIAEMKTGEGKTLTSTLAVYLNSLAGKGVHVVTVNDYLAKRDANWMKPIYDFLGISVGVIQHDMDHEQRKIAYSADITYGTNNEFGFDYLRDNMVSHKDHKVQRSHFFAIVDEVDSILIDEARTPLIISGSSDETTDKYVRINKIIPKLVAIEDFEVDEKARNVLLSEKGVSHVEEILGIENLYAPENVDLVHHVHQALKAHKIFQKDVDYVVQNGEVIIVDEFTGRLMAGRRYSDGLHQALEAKESVTIAKESQTLASITFQNYFRMYDKLAGMTGTADTEAEEFRKIYDLDVIVIPPNVSVRRKDSPDRVYRTEKEKFDAILAEIRELQSKKQPVLVGTISIEKSEILSKMLSSAGIQHNVLNAKFHEREAEIVANAGKPGAVTIATNMAGRGTDIVLGGAQLYKENLETWKDDDDLVRRFKESILKQELDNAELLIREMDSSVKQKRASEILESVKIWKKNHEDVLVAGGLHILGTERHEARRIDNQLRGRSGRQGDPGSSRFYLSLQDDLMRIFGSDRISGLMKWANMPEGQEIESKMVSNAIARAQKRVEGHNFDIRKHLLEYDDVMNRQRIVIYKMRNEVLENEDISSLILSFIEEAVENQIVAHCEGNNPSSWNLDSLKEWLEGLELNLEINEEDFKKTKNPQLALFEKVNAAAKQKYEDRAESIGKDIWKLLERNIFLDILDHRWKEHLYSMDHLREGIWTVGYSERNPLVEYKLQGFRMFDVAIENLKNEVVNFLFRVEVSENSKLPEERREYKKVGQEVTGGFQELSSGTPSPTVTVTTSSGGGTERKTSRRRKR.

Residues glutamine 89, 107–111, and aspartate 496 contribute to the ATP site; that span reads GEGKT. Positions 870–904 are disordered; the sequence is GGFQELSSGTPSPTVTVTTSSGGGTERKTSRRRKR. Over residues 876 to 889 the composition is skewed to low complexity; sequence SSGTPSPTVTVTTS.

Belongs to the SecA family. In terms of assembly, monomer and homodimer. Part of the essential Sec protein translocation apparatus which comprises SecA, SecYEG and auxiliary proteins SecDF. Other proteins may also be involved.

The protein localises to the cell inner membrane. The protein resides in the cytoplasm. It carries out the reaction ATP + H2O + cellular proteinSide 1 = ADP + phosphate + cellular proteinSide 2.. In terms of biological role, part of the Sec protein translocase complex. Interacts with the SecYEG preprotein conducting channel. Has a central role in coupling the hydrolysis of ATP to the transfer of proteins into and across the cell membrane, serving as an ATP-driven molecular motor driving the stepwise translocation of polypeptide chains across the membrane. The sequence is that of Protein translocase subunit SecA from Leptospira borgpetersenii serovar Hardjo-bovis (strain JB197).